We begin with the raw amino-acid sequence, 393 residues long: S-adenosylmethionine synthase (393 aa).

Position 10 (glutamate 10) interacts with Mg(2+). Residue histidine 16 coordinates ATP. A K(+)-binding site is contributed by glutamate 44. The L-methionine site is built by glutamate 57 and glutamine 100. Residues 168–170 (DGK), 236–239 (SGRF), aspartate 247, 253–254 (RK), alanine 270, lysine 274, and lysine 278 each bind ATP. Aspartate 247 is a binding site for L-methionine. Lysine 278 provides a ligand contact to L-methionine.

Belongs to the AdoMet synthase family. In terms of assembly, homotetramer. It depends on Mn(2+) as a cofactor. Requires Mg(2+) as cofactor. Co(2+) is required as a cofactor. K(+) serves as cofactor.

The protein localises to the cytoplasm. The enzyme catalyses L-methionine + ATP + H2O = S-adenosyl-L-methionine + phosphate + diphosphate. It functions in the pathway amino-acid biosynthesis; S-adenosyl-L-methionine biosynthesis; S-adenosyl-L-methionine from L-methionine: step 1/1. In terms of biological role, catalyzes the formation of S-adenosylmethionine from methionine and ATP. The reaction comprises two steps that are both catalyzed by the same enzyme: formation of S-adenosylmethionine (AdoMet) and triphosphate, and subsequent hydrolysis of the triphosphate. The protein is S-adenosylmethionine synthase (METK) of Musa acuminata (Banana).